The chain runs to 141 residues: Regulator of ribonuclease activity B (141 aa).

The segment covering D119 to D132 has biased composition (acidic residues). The disordered stretch occupies residues D119–H141.

It belongs to the RraB family. As to quaternary structure, interacts with the C-terminal region of Rne.

The protein resides in the cytoplasm. Its function is as follows. Globally modulates RNA abundance by binding to RNase E (Rne) and regulating its endonucleolytic activity. Can modulate Rne action in a substrate-dependent manner by altering the composition of the degradosome. This chain is Regulator of ribonuclease activity B, found in Shewanella amazonensis (strain ATCC BAA-1098 / SB2B).